Consider the following 297-residue polypeptide: tRNA dimethylallyltransferase (297 aa).

8-15 is an ATP binding site; it reads GATASGKS. 10–15 provides a ligand contact to substrate; the sequence is TASGKS. The segment at 33–36 is interaction with substrate tRNA; it reads DSLS.

This sequence belongs to the IPP transferase family. As to quaternary structure, monomer. Requires Mg(2+) as cofactor.

It carries out the reaction adenosine(37) in tRNA + dimethylallyl diphosphate = N(6)-dimethylallyladenosine(37) in tRNA + diphosphate. Functionally, catalyzes the transfer of a dimethylallyl group onto the adenine at position 37 in tRNAs that read codons beginning with uridine, leading to the formation of N6-(dimethylallyl)adenosine (i(6)A). This is tRNA dimethylallyltransferase from Sulfurimonas denitrificans (strain ATCC 33889 / DSM 1251) (Thiomicrospira denitrificans (strain ATCC 33889 / DSM 1251)).